Consider the following 37-residue polypeptide: Large ribosomal subunit protein bL36 (37 aa).

This sequence belongs to the bacterial ribosomal protein bL36 family.

In Deinococcus deserti (strain DSM 17065 / CIP 109153 / LMG 22923 / VCD115), this protein is Large ribosomal subunit protein bL36.